Consider the following 282-residue polypeptide: uncharacterized protein (282 aa).

Disordered regions lie at residues 1-45 and 201-259; these read MPLE…EEDE and DRRR…KPWG. Residues 10 to 19 are compositionally biased toward basic and acidic residues; the sequence is SEMKEFKEST. Over residues 26–38 the composition is skewed to polar residues; the sequence is SVSSEETLTQSMV. Over residues 201-237 the composition is skewed to basic and acidic residues; that stretch reads DRRRKEDSKARSRLTRREEHSEHHRSGKSRRERERRS.

This is an uncharacterized protein from Ostreid herpesvirus 1 (isolate France) (OsHV-1).